The sequence spans 351 residues: uncharacterized protein (351 aa).

5 residues coordinate Mn(2+): D215, D226, H290, E319, and E333.

Belongs to the peptidase M24B family. Requires Mn(2+) as cofactor.

This is an uncharacterized protein from Staphylococcus aureus (strain MW2).